The primary structure comprises 191 residues: Protein G1-like1 (191 aa).

Residues 1 to 29 (MDMIGMASPAESPGGGGTARPSRYESQKR) form a disordered region. Positions 23 to 150 (RYESQKRRDW…ARGIAYEKKR (128 aa)) constitute an ALOG domain. The Nuclear localization signal motif lies at 148–152 (KKRRK). Residues 152–179 (KRAAASHTKQKQQQQQLVEQAAAAAEAH) adopt a coiled-coil conformation.

This sequence belongs to the plant homeotic and developmental regulators ALOG protein family.

Its subcellular location is the nucleus. In terms of biological role, probable transcription regulator that acts as a developmental regulator by promoting cell growth in response to light. This is Protein G1-like1 from Oryza sativa subsp. indica (Rice).